Consider the following 691-residue polypeptide: Elongation factor G (691 aa).

Positions Glu8 to Thr283 constitute a tr-type G domain. GTP is bound by residues Ala17–Thr24, Asp81–His85, and Asn135–Asp138.

It belongs to the TRAFAC class translation factor GTPase superfamily. Classic translation factor GTPase family. EF-G/EF-2 subfamily.

It is found in the cytoplasm. In terms of biological role, catalyzes the GTP-dependent ribosomal translocation step during translation elongation. During this step, the ribosome changes from the pre-translocational (PRE) to the post-translocational (POST) state as the newly formed A-site-bound peptidyl-tRNA and P-site-bound deacylated tRNA move to the P and E sites, respectively. Catalyzes the coordinated movement of the two tRNA molecules, the mRNA and conformational changes in the ribosome. The polypeptide is Elongation factor G (Maricaulis maris (strain MCS10) (Caulobacter maris)).